We begin with the raw amino-acid sequence, 423 residues long: Glycine amidinotransferase, mitochondrial (423 aa).

A mitochondrion-targeting transit peptide spans 1–48; the sequence is MLRVRCLRGGSRGAEAVHYIGSRLGRTLTGWVQRTFQSTQAATASSRN. The segment covering 39-51 has biased composition (low complexity); sequence TQAATASSRNSSA. Residues 39–65 are disordered; it reads TQAATASSRNSSAADDKATEPLPKDCP. Phosphoserine is present on residues Ser46 and Ser49. Positions 52 to 61 are enriched in basic and acidic residues; that stretch reads ADDKATEPLP. An arginine-binding site is contributed by Asp170. Catalysis depends on residues Asp254 and His303. Arginine contacts are provided by Asp305, Arg322, Ser354, and Ser355. Lys385 carries the post-translational modification N6-acetyllysine. Cys407 (amidino-cysteine intermediate) is an active-site residue.

The protein belongs to the amidinotransferase family. As to quaternary structure, homodimer.

The protein resides in the mitochondrion inner membrane. The catalysed reaction is L-arginine + glycine = guanidinoacetate + L-ornithine. It catalyses the reaction 4-aminobutanoate + L-arginine = 4-guanidinobutanoate + L-ornithine. It carries out the reaction beta-alanine + L-arginine = 3-guanidinopropanoate + L-ornithine. The enzyme catalyses taurine + L-arginine = taurocyamine + L-ornithine. It functions in the pathway amine and polyamine biosynthesis; creatine biosynthesis; creatine from L-arginine and glycine: step 1/2. In terms of biological role, transamidinase that catalyzes the transfer of the amidino group of L-arginine onto the amino moiety of acceptor metabolites such as glycine, beta-alanine, gamma-aminobutyric acid (GABA) and taurine yielding the corresponding guanidine derivatives. Catalyzes the rate-limiting step of creatine biosynthesis, namely the transfer of the amidino group from L-arginine to glycine to generate guanidinoacetate, which is then methylated by GAMT to form creatine. Provides creatine as a source for ATP generation in tissues with high energy demands, in particular skeletal muscle, heart and brain. This is Glycine amidinotransferase, mitochondrial (GATM) from Pongo abelii (Sumatran orangutan).